Reading from the N-terminus, the 244-residue chain is DNA repair protein RecO (244 aa).

The protein belongs to the RecO family.

In terms of biological role, involved in DNA repair and RecF pathway recombination. The protein is DNA repair protein RecO of Geobacter metallireducens (strain ATCC 53774 / DSM 7210 / GS-15).